The sequence spans 306 residues: D-alanine--D-alanine ligase (306 aa).

One can recognise an ATP-grasp domain in the interval 102-300; that stretch reads KIIAANAGVC…YGDIVQWMVE (199 aa). Residue 128 to 183 participates in ATP binding; the sequence is PMEPPYVIKPVCEGSSFGVVIVQENEAVPPHNIGGSEWGYADEVMVEKYIPGRELT. The Mg(2+) site is built by aspartate 253, glutamate 267, and asparagine 269.

The protein belongs to the D-alanine--D-alanine ligase family. The cofactor is Mg(2+). Mn(2+) is required as a cofactor.

It localises to the cytoplasm. It catalyses the reaction 2 D-alanine + ATP = D-alanyl-D-alanine + ADP + phosphate + H(+). It functions in the pathway cell wall biogenesis; peptidoglycan biosynthesis. In terms of biological role, cell wall formation. This Bartonella tribocorum (strain CIP 105476 / IBS 506) protein is D-alanine--D-alanine ligase.